We begin with the raw amino-acid sequence, 499 residues long: Apolipoprotein N-acyltransferase (499 aa).

Helical transmembrane passes span 17–37 (VLAG…ALAL), 38–58 (LWSA…AVLL), 84–104 (ASIW…WAWL), 131–151 (IWGL…GVGG), 163–183 (LARW…GWWL), and 198–218 (RSLL…WSLL). In terms of domain architecture, CN hydrolase spans 232 to 458 (WQPAIPTRSK…EGVGLADLHF (227 aa)). Residue E273 is the Proton acceptor of the active site. K322 is an active-site residue. C370 acts as the Nucleophile in catalysis. A helical membrane pass occupies residues 474 to 494 (IGLMLFAVVGLGLSRVRSWLI).

This sequence belongs to the CN hydrolase family. Apolipoprotein N-acyltransferase subfamily.

The protein localises to the cell inner membrane. It carries out the reaction N-terminal S-1,2-diacyl-sn-glyceryl-L-cysteinyl-[lipoprotein] + a glycerophospholipid = N-acyl-S-1,2-diacyl-sn-glyceryl-L-cysteinyl-[lipoprotein] + a 2-acyl-sn-glycero-3-phospholipid + H(+). It participates in protein modification; lipoprotein biosynthesis (N-acyl transfer). Catalyzes the phospholipid dependent N-acylation of the N-terminal cysteine of apolipoprotein, the last step in lipoprotein maturation. In Prochlorococcus marinus (strain MIT 9313), this protein is Apolipoprotein N-acyltransferase.